The chain runs to 243 residues: Voltage-gated monoatomic cation channel TMEM109 (243 aa).

The N-terminal stretch at 1-33 is a signal peptide; the sequence is MAGSGSSAPWGKHLLHAVLMVLVALVLLHSALA. Over 34-83 the chain is Lumenal; it reads QSHRDFAPPGQQRREAPVDLLTQIGRSVRETLDTWIGPETMHLISETLSQ. Residues 84-104 traverse the membrane as a helical segment; that stretch reads VMWAISSAISVAFFALSGIAA. Topologically, residues 105–135 are cytoplasmic; that stretch reads QLLTALGLDGDHLTQGLKLSPSQVQTFLLWG. The chain crosses the membrane as a helical span at residues 136–156; it reads AGALVVYWLLSLLLGLVLAVL. The Lumenal segment spans residues 157 to 185; the sequence is GRILGGLKLVIFLAGFVALVRSVPDPSTR. The helical transmembrane segment at 186 to 205 threads the bilayer; that stretch reads ALLLLALLTLYALLSRLTGS. The Cytoplasmic portion of the chain corresponds to 206-243; the sequence is RASGAQLEAKVRGLERQVDELRWRQRRAAKGARSVEEE.

In terms of assembly, homooligomer. Interacts with CRYAB; in the cellular response to DNA damage. In terms of processing, the N-terminus is blocked. In terms of tissue distribution, widely expressed. Expressed in skeletal, cardiac and smooth muscle cells, in brain, including neuroglial cells, cerebral cortex neurons and cerebellum, but not Purkinje cells. Also detected in Paneth and Goblet cells of the small intestine (but not in the epithelium), duodenal gland, pancreas, parotid gland, testis, thyroid gland and adrenal gland, as well as in epidermis, choroid plexus, ductus epididymidis, lymphocytes, fibroblasts, endothelial cells and seminiferous epithelial cells (at protein level). Not detected in mucous cells of the duodenal gland, in hepatocytes nor in uriniferous tubules.

It is found in the nucleus outer membrane. The protein resides in the endoplasmic reticulum membrane. The protein localises to the sarcoplasmic reticulum membrane. The catalysed reaction is K(+)(in) = K(+)(out). The enzyme catalyses Ca(2+)(in) = Ca(2+)(out). Functionally, functions as a voltage-gated monoatomic cation channel permeable to both potassium and calcium. Plays a role in the cellular response to DNA damage. This is Voltage-gated monoatomic cation channel TMEM109 from Oryctolagus cuniculus (Rabbit).